The sequence spans 279 residues: MPIKTFRPYTPSRRTITVADFSEITTKTPEKRLVKGLRKTGGRNNTGMIMVRHIGGGHKRAYRQIDFKREKYGVPAKVATIEYDPNRNARICLLHYADGDKRYIIHPVGLKIGDEVMSGPNAEIKVGNCLPLKNIPEGTFIHALELKVGKGAQLVRSAGSQAQLMAKENDYAHVKMPSGEIRLVPIACCASIGQVGNVEHNNIVIGNAGRKRHRGVKPTVRGSAMNAVDHPMGGGRGHSKGGNIPRSPWNQPSRGLKTRPKKSWDWMIVSDRRKNKAGK.

The disordered stretch occupies residues 224 to 279; it reads AMNAVDHPMGGGRGHSKGGNIPRSPWNQPSRGLKTRPKKSWDWMIVSDRRKNKAGK.

This sequence belongs to the universal ribosomal protein uL2 family. As to quaternary structure, part of the 50S ribosomal subunit. Forms a bridge to the 30S subunit in the 70S ribosome.

Functionally, one of the primary rRNA binding proteins. Required for association of the 30S and 50S subunits to form the 70S ribosome, for tRNA binding and peptide bond formation. It has been suggested to have peptidyltransferase activity; this is somewhat controversial. Makes several contacts with the 16S rRNA in the 70S ribosome. This is Large ribosomal subunit protein uL2 from Elusimicrobium minutum (strain Pei191).